A 215-amino-acid polypeptide reads, in one-letter code: MREELVWIDCEMTGLDLGPDKLIEIAALVTDADLNILGDGVDVVIHADDAALSSMVDVVADMHSRSGLTEEVRASTVDMATAEAMVLDYIGEHVKQPKTAPLAGNSIATDRSFIARDMPALDAFLHYRMIDVSSIKELCRRWYPRIYFGQPPKGLAHRALADIHESIRELQYYRRTAFVPQPGPTTSEITAVVADLQGVDDAPEATDSAQERPSG.

Positions leucine 5–leucine 170 constitute an Exonuclease domain. The active site involves tyrosine 127.

Belongs to the oligoribonuclease family.

The protein resides in the cytoplasm. 3'-to-5' exoribonuclease specific for small oligoribonucleotides. In Mycobacterium ulcerans (strain Agy99), this protein is Oligoribonuclease.